The primary structure comprises 490 residues: Probable cytochrome P450 518B1 (490 aa).

The chain crosses the membrane as a helical span at residues 2–22 (LTNIIILIILYLFYDFCYKNF). C437 serves as a coordination point for heme.

Belongs to the cytochrome P450 family. Heme is required as a cofactor.

The protein resides in the membrane. This chain is Probable cytochrome P450 518B1 (cyp518B1), found in Dictyostelium discoideum (Social amoeba).